A 179-amino-acid chain; its full sequence is Putative manganese efflux pump MntP (179 aa).

6 helical membrane passes run V4–I24, L39–L59, I69–E89, I102–H122, I128–Y148, and S159–F179.

Belongs to the MntP (TC 9.B.29) family.

The protein localises to the cell inner membrane. Functionally, probably functions as a manganese efflux pump. This chain is Putative manganese efflux pump MntP, found in Aliarcobacter butzleri (strain RM4018) (Arcobacter butzleri).